Consider the following 590-residue polypeptide: V-type ATP synthase alpha chain (590 aa).

234–241 (GGFGAGKT) contributes to the ATP binding site.

It belongs to the ATPase alpha/beta chains family.

It catalyses the reaction ATP + H2O + 4 H(+)(in) = ADP + phosphate + 5 H(+)(out). Functionally, produces ATP from ADP in the presence of a proton gradient across the membrane. The V-type alpha chain is a catalytic subunit. This chain is V-type ATP synthase alpha chain, found in Halothermothrix orenii (strain H 168 / OCM 544 / DSM 9562).